The sequence spans 353 residues: DNA integrity scanning protein DisA (353 aa).

Residues 6–144 enclose the DAC domain; it reads DKELMNILKI…GGIKYVLRDS (139 aa). Residues glycine 73, leucine 91, and 104–108 each bind ATP; that span reads TRHRT.

This sequence belongs to the DisA family. In terms of assembly, homooctamer. Mg(2+) serves as cofactor.

It catalyses the reaction 2 ATP = 3',3'-c-di-AMP + 2 diphosphate. Its function is as follows. Participates in a DNA-damage check-point that is active prior to asymmetric division when DNA is damaged. DisA forms globular foci that rapidly scan along the chromosomes during sporulation, searching for lesions. When a lesion is present, DisA pauses at the lesion site. This triggers a cellular response that culminates in a temporary block in sporulation initiation. In terms of biological role, also has diadenylate cyclase activity, catalyzing the condensation of 2 ATP molecules into cyclic di-AMP (c-di-AMP). c-di-AMP acts as a signaling molecule that couples DNA integrity with progression of sporulation. The rise in c-di-AMP level generated by DisA while scanning the chromosome, operates as a positive signal that advances sporulation; upon encountering a lesion, the DisA focus arrests at the damaged site and halts c-di-AMP synthesis. The protein is DNA integrity scanning protein DisA of Clostridium botulinum (strain Kyoto / Type A2).